The sequence spans 61 residues: UPF0434 protein Pfl01_4174 (61 aa).

This sequence belongs to the UPF0434 family.

This chain is UPF0434 protein Pfl01_4174, found in Pseudomonas fluorescens (strain Pf0-1).